Consider the following 808-residue polypeptide: Ribosome biogenesis protein BOP1 homolog (808 aa).

Composition is skewed to low complexity over residues 1–25 (MTSP…LTPC) and 33–50 (ATSS…SSFD). The tract at residues 1-55 (MTSPKGKPSPKRSAPAPATAALTPCAEERTEGATSSASASASSHISSSFDSPRDD) is disordered. WD repeat units follow at residues 430–469 (GHTA…LMKR), 640–680 (KFSE…RRFK), 682–720 (SGGV…KPYK), 724–766 (SHKG…DYNK), and 777–808 (KHQR…AWTE).

The protein belongs to the WD repeat BOP1/ERB1 family.

The protein resides in the nucleus. It localises to the nucleolus. Its subcellular location is the nucleoplasm. Functionally, required for maturation of ribosomal RNAs and formation of the large ribosomal subunit. The protein is Ribosome biogenesis protein BOP1 homolog of Leishmania major.